Consider the following 249-residue polypeptide: 2,3-bisphosphoglycerate-dependent phosphoglycerate mutase (249 aa).

Substrate-binding positions include 9-16 (RHGQSQWN), 22-23 (TG), R61, 88-91 (ERHY), K99, 115-116 (RR), and 184-185 (GN). H10 serves as the catalytic Tele-phosphohistidine intermediate. E88 serves as the catalytic Proton donor/acceptor.

It belongs to the phosphoglycerate mutase family. BPG-dependent PGAM subfamily. Homodimer.

The catalysed reaction is (2R)-2-phosphoglycerate = (2R)-3-phosphoglycerate. It functions in the pathway carbohydrate degradation; glycolysis; pyruvate from D-glyceraldehyde 3-phosphate: step 3/5. Catalyzes the interconversion of 2-phosphoglycerate and 3-phosphoglycerate. The protein is 2,3-bisphosphoglycerate-dependent phosphoglycerate mutase of Xanthomonas oryzae pv. oryzae (strain PXO99A).